Here is a 467-residue protein sequence, read N- to C-terminus: Peptidoglycan-N-acetylmuramic acid deacetylase PdaC (467 aa).

A helical transmembrane segment spans residues 6–26 (IKWFHVLIAVVCVVGLIGFFH). The NodB homology domain occupies 278-452 (KVIALTFDDG…KLTDQGYQLV (175 aa)). Asp-285 serves as the catalytic Proton acceptor. A divalent metal cation is bound by residues Asp-286, His-336, and His-340. The active-site Proton donor is His-427.

In the N-terminal section; belongs to the RsiV family. The protein in the C-terminal section; belongs to the polysaccharide deacetylase family.

Its subcellular location is the cell membrane. With respect to regulation, activated by divalent metal cations; Mn(2+) is the most efficient, followed by Ca(2+) and Mg(2+). In contrast to PgdA from S.pneumoniae, these ions are not absolutely required for deacetylase activity. Functionally, catalyzes the deacetylation of N-acetylmuramic acid (MurNAc) residues in peptidoglycan, a modification that confers resistance to lysosyme. Is not able to deacetylate N-acetylglucosamine (GlcNAc) residues in peptidoglycan, but can deacylate chitin oligomers such as GlcNAc4 and GlcNAc5. Is essentially not active toward chitosan (partially deacetylated GlcNAc polymer) and has very low activity toward chitin (GlcNAc polymer). Does not deacetylate GlcNAc. The sequence is that of Peptidoglycan-N-acetylmuramic acid deacetylase PdaC (pdaC) from Bacillus subtilis (strain 168).